The primary structure comprises 586 residues: Phosphomethylpyrimidine synthase (586 aa).

The disordered stretch occupies residues 1–33 (MKQSVSAEQIELKSSLPGSKKVYVDGPREGMKV). The segment covering 22–33 (VYVDGPREGMKV) has biased composition (basic and acidic residues). Residues asparagine 193, methionine 222, tyrosine 251, histidine 287, 307–309 (SRG), 348–351 (DGLR), and glutamate 387 contribute to the substrate site. A Zn(2+)-binding site is contributed by histidine 391. Substrate is bound at residue tyrosine 414. Zn(2+) is bound at residue histidine 455. The [4Fe-4S] cluster site is built by cysteine 535, cysteine 538, and cysteine 543.

The protein belongs to the ThiC family. Requires [4Fe-4S] cluster as cofactor.

It catalyses the reaction 5-amino-1-(5-phospho-beta-D-ribosyl)imidazole + S-adenosyl-L-methionine = 4-amino-2-methyl-5-(phosphooxymethyl)pyrimidine + CO + 5'-deoxyadenosine + formate + L-methionine + 3 H(+). It participates in cofactor biosynthesis; thiamine diphosphate biosynthesis. Catalyzes the synthesis of the hydroxymethylpyrimidine phosphate (HMP-P) moiety of thiamine from aminoimidazole ribotide (AIR) in a radical S-adenosyl-L-methionine (SAM)-dependent reaction. The polypeptide is Phosphomethylpyrimidine synthase (Bacillus cereus (strain B4264)).